A 488-amino-acid chain; its full sequence is MTRALMIQGTGSDVGKSLLVAGLARAFTRRGLRVRPFKPQNMSNNAAVTADGGEIGRAQALQARAARVAPSVHMNPVLLKPQSEVGAQVVVQGRMIGTARARDYQAWKPRLMESVLDSFERLRADSDLVLVEGAGSPAEVNLRRGDIANMGFARATDTPVVIVGDIDRGGVIASLVGTQAVMEPDDAAMIRGFIVNRFRGDPTLFADGMALIAERTGWTPFGLVPFFPEAGRLPPEDAVALDVAGAGRDGSVPLIAVLRFPHIANFDDLDPLRQEPGVSVAFVPAGEPIPAEADLIVLPGSKTTIDDLDFLRAQGWDIDIRAHLRRGRRVLGLCGGYQMLGRAIADPQGIEGAPRALPGLGLLDVETVMTAEKRLVAVTGTTLADDEPFSGYEMHVGDTTGPDAAHPLLRFADGRADGAVSADGLVAGTYVHGLFANDRQRAAWLARLGAAPGLTNYEAGIEAVLDRFADHLEAHLDCDGLLRLCRPL.

The region spanning 252-440 (VPLIAVLRFP…VHGLFANDRQ (189 aa)) is the GATase cobBQ-type domain. Catalysis depends on cysteine 334, which acts as the Nucleophile. The active site involves histidine 432.

It belongs to the CobB/CobQ family. CobQ subfamily.

It functions in the pathway cofactor biosynthesis; adenosylcobalamin biosynthesis. In terms of biological role, catalyzes amidations at positions B, D, E, and G on adenosylcobyrinic A,C-diamide. NH(2) groups are provided by glutamine, and one molecule of ATP is hydrogenolyzed for each amidation. This is Cobyric acid synthase from Methylorubrum populi (strain ATCC BAA-705 / NCIMB 13946 / BJ001) (Methylobacterium populi).